Consider the following 473-residue polypeptide: H(+)/Cl(-) exchange transporter ClcA (473 aa).

The Cytoplasmic portion of the chain corresponds to 1–32 (MKTDTSTFLAQQIVRLRRRDQIRRLMQRDKTP). A helical membrane pass occupies residues 33-69 (LAILLMAAVVGTLTGLVGVAFEKAVSWVQNMRIGALV). The Periplasmic portion of the chain corresponds to 70–76 (QVADHAF). The chain crosses the membrane as a helical span at residues 77–100 (LLWPLAFILSALLAMVGYFLVRKF). The Selectivity filter part_1 motif lies at 106–110 (GSGIP). Ser-107 is a chloride binding site. Residues 109–116 (IPEIEGAL) constitute an intramembrane region (helical). The Cytoplasmic portion of the chain corresponds to 117 to 123 (EELRPVR). 2 helical membrane passes run 124 to 141 (WWRVLPVKFIGGMGTLGA) and 148 to 166 (EGPTVQIGGNLGRMVLDVF). The short motif at 146 to 150 (GREGP) is the Selectivity filter part_2 element. Over 167-176 (RMRSAEARHT) the chain is Cytoplasmic. 2 consecutive intramembrane regions (helical) follow at residues 177 to 189 (LLATGAAAGLSAA) and 193 to 201 (PLAGILFII). Residues 202–214 (EEMRPQFRYNLIS) lie on the Cytoplasmic side of the membrane. The chain crosses the membrane as a helical span at residues 215–232 (IKAVFTGVIMSSIVFRIF). The Periplasmic portion of the chain corresponds to 233 to 252 (NGEAPIIEVGKLSDAPVNTL). Residues 253 to 281 (WLYLILGIIFGCVGPVFNSLVLRTQDMFQ) traverse the membrane as a helical segment. The Cytoplasmic portion of the chain corresponds to 282–287 (RFHGGE). Residues 288–309 (IKKWVLMGGAIGGLCGILGLIE) traverse the membrane as a helical segment. The Periplasmic segment spans residues 310-329 (PEAAGGGFNLIPIAAAGNFS). 2 helical membrane-spanning segments follow: residues 330–349 (VGLLLFIFITRVVTTLLCFS) and 355–376 (GIFAPMLALGTLLGTAFGMAAA). The Selectivity filter part_3 motif lies at 355-359 (GIFAP). Chloride-binding residues include Ile-356 and Phe-357. At 377–386 (VLFPQYHLEA) the chain is on the periplasmic side. Residues 387-401 (GTFAIAGMGALMAAS) constitute an intramembrane region (helical). Residues 402–404 (VRA) constitute an intramembrane region (note=Loop between two helices). An intramembrane region (helical) is located at residues 405–416 (PLTGIVLVLEMT). The note=Loop between two helices intramembrane region spans 417–421 (DNYQL). A helical transmembrane segment spans residues 422-438 (ILPMIITCLGATLLAQF). Over 439–473 (LGGKPLYSTILARTLAKQDAEQAAKNQNAPAGENT) the chain is Cytoplasmic. Tyr-445 is a binding site for chloride.

It belongs to the chloride channel (TC 2.A.49) family. ClcA subfamily. As to quaternary structure, homodimer.

The protein resides in the cell inner membrane. The enzyme catalyses 2 chloride(in) + H(+)(out) = 2 chloride(out) + H(+)(in). Proton-coupled chloride transporter. Functions as antiport system and exchanges two chloride ions for 1 proton. Probably acts as an electrical shunt for an outwardly-directed proton pump that is linked to amino acid decarboxylation, as part of the extreme acid resistance (XAR) response. The protein is H(+)/Cl(-) exchange transporter ClcA of Salmonella newport (strain SL254).